Consider the following 132-residue polypeptide: Small ribosomal subunit protein uS8 (132 aa).

Belongs to the universal ribosomal protein uS8 family. In terms of assembly, part of the 30S ribosomal subunit. Contacts proteins S5 and S12.

Functionally, one of the primary rRNA binding proteins, it binds directly to 16S rRNA central domain where it helps coordinate assembly of the platform of the 30S subunit. The polypeptide is Small ribosomal subunit protein uS8 (Allorhizobium ampelinum (strain ATCC BAA-846 / DSM 112012 / S4) (Agrobacterium vitis (strain S4))).